The primary structure comprises 113 residues: Hydrogenase maturation factor HypA (113 aa).

Histidine 2 serves as a coordination point for Ni(2+). The Zn(2+) site is built by cysteine 73, cysteine 76, cysteine 89, and cysteine 92.

It belongs to the HypA/HybF family.

Involved in the maturation of [NiFe] hydrogenases. Required for nickel insertion into the metal center of the hydrogenase. The chain is Hydrogenase maturation factor HypA from Xanthobacter autotrophicus (strain ATCC BAA-1158 / Py2).